A 255-amino-acid chain; its full sequence is Trans-aconitate 2-methyltransferase (255 aa).

Belongs to the methyltransferase superfamily. Tam family.

Its subcellular location is the cytoplasm. It carries out the reaction trans-aconitate + S-adenosyl-L-methionine = (E)-3-(methoxycarbonyl)pent-2-enedioate + S-adenosyl-L-homocysteine. In terms of biological role, catalyzes the S-adenosylmethionine monomethyl esterification of trans-aconitate. In Mycolicibacterium gilvum (strain PYR-GCK) (Mycobacterium gilvum (strain PYR-GCK)), this protein is Trans-aconitate 2-methyltransferase.